The sequence spans 48 residues: Histone H4 (48 aa).

Over residues Met1–Lys14 the composition is skewed to gly residues. A disordered region spans residues Met1–Arg23.

It belongs to the histone H4 family. In terms of assembly, the nucleosome is a histone octamer containing two molecules each of H2A, H2B, H3 and H4 assembled in one H3-H4 heterotetramer and two H2A-H2B heterodimers. The octamer wraps approximately 147 bp of DNA.

The protein localises to the nucleus. The protein resides in the chromosome. Its function is as follows. Core component of nucleosome. Nucleosomes wrap and compact DNA into chromatin, limiting DNA accessibility to the cellular machineries which require DNA as a template. Histones thereby play a central role in transcription regulation, DNA repair, DNA replication and chromosomal stability. DNA accessibility is regulated via a complex set of post-translational modifications of histones, also called histone code, and nucleosome remodeling. This chain is Histone H4, found in Blepharisma japonicum.